A 291-amino-acid polypeptide reads, in one-letter code: Nucleotide-binding protein LJ_0866 (291 aa).

13 to 20 contributes to the ATP binding site; that stretch reads GMSGAGKT. 63–66 provides a ligand contact to GTP; the sequence is DLRV.

This sequence belongs to the RapZ-like family.

Its function is as follows. Displays ATPase and GTPase activities. The sequence is that of Nucleotide-binding protein LJ_0866 from Lactobacillus johnsonii (strain CNCM I-12250 / La1 / NCC 533).